Reading from the N-terminus, the 104-residue chain is Large ribosomal subunit protein uL24 (104 aa).

It belongs to the universal ribosomal protein uL24 family. Part of the 50S ribosomal subunit.

One of two assembly initiator proteins, it binds directly to the 5'-end of the 23S rRNA, where it nucleates assembly of the 50S subunit. In terms of biological role, one of the proteins that surrounds the polypeptide exit tunnel on the outside of the subunit. The sequence is that of Large ribosomal subunit protein uL24 from Shewanella loihica (strain ATCC BAA-1088 / PV-4).